The primary structure comprises 1486 residues: Homeobox protein cut-like 2 (1486 aa).

The segment at 114–167 is disordered; that stretch reads DRLQPPSFDPSGQPRRDLHTSWKRNPELLSPKEQREGTSPAGPTLTEGSRLPGI. A compositionally biased stretch (basic and acidic residues) spans 127–149; sequence PRRDLHTSWKRNPELLSPKEQRE. Ser-143 is modified (phosphoserine). A coiled-coil region spans residues 195 to 374; sequence TLAARLGEAE…IKTELSILKA (180 aa). Disordered stretches follow at residues 415–481, 517–549, 661–690, 716–758, 800–858, and 964–1032; these read LLAS…LSPF, PTAPATPAPGPEPLGGPEPADGGGGGAAGPGAE, EIESQKGGEPKTSVAPLSIANGTTPASTSE, VAPR…AQAP, YASV…EGAT, and GQAV…SGSQ. Acidic residues predominate over residues 419-428; that stretch reads PEEDPSEDDS. Over residues 443-460 the composition is skewed to pro residues; the sequence is QQLPPPPGPEDPLSPSPG. Residues 461-470 are compositionally biased toward low complexity; that stretch reads QPLLGPSLGP. Over residues 517–532 the composition is skewed to pro residues; sequence PTAPATPAPGPEPLGG. A DNA-binding region (CUT 1) is located at residues 544–631; sequence AGPGAEEEQL…VLALRTIQVR (88 aa). Positions 680–690 are enriched in polar residues; that stretch reads ANGTTPASTSE. Residues 690–717 are a coiled coil; that stretch reads EDAIKSILEQARREMQAQQQALLEMEVA. Residues 802–816 are compositionally biased toward low complexity; that stretch reads SVSPSLSSSSSSGYS. Acidic residues predominate over residues 834–844; the sequence is PEDEAAAGAED. The span at 845–854 shows a compositional bias: basic and acidic residues; the sequence is EPPRTGELKA. A DNA-binding region (CUT 2) is located at residues 887–974; sequence QYELYMYREV…QAVGQQPGAS (88 aa). Polar residues predominate over residues 967–976; sequence VGQQPGASQA. A compositionally biased stretch (low complexity) spans 1017-1031; it reads GRSSSSLSGKMYSGS. A DNA-binding region (CUT 3) is located at residues 1038–1125; it reads QEIVAMSPEL…VEKLRDMKKL (88 aa). The homeobox DNA-binding region spans 1168 to 1227; it reads IKKPRVVLAPEEKEALRKAYQLEPYPSQQTIELLSFQLNLKTNTVINWFHNYRSRMRREM. The interval 1231 to 1453 is disordered; the sequence is GTQDEPDLDP…ALHPSAKVNP (223 aa). A compositionally biased stretch (basic and acidic residues) spans 1266 to 1276; it reads EDQKPTVKELE. Polar residues predominate over residues 1283 to 1293; it reads ENSTPLTTQDK. The segment covering 1320-1334 has biased composition (basic and acidic residues); sequence ELDKGQGPPKEEHPD. The span at 1381–1401 shows a compositional bias: polar residues; sequence KSASESSRCSLEVSLNSPSAA. Residues 1402-1420 are compositionally biased toward low complexity; it reads SSPGLMMSVSPVPSSSAPI. The span at 1421-1431 shows a compositional bias: pro residues; sequence SPSPPGAPPAK.

Belongs to the CUT homeobox family.

It is found in the nucleus. Functionally, transcription factor involved in the control of neuronal proliferation and differentiation in the brain. Regulates dendrite development and branching, dendritic spine formation, and synaptogenesis in cortical layers II-III. Binds to DNA in a sequence-specific manner. This chain is Homeobox protein cut-like 2 (CUX2), found in Homo sapiens (Human).